Reading from the N-terminus, the 633-residue chain is Chaperone protein DnaK (633 aa).

The residue at position 198 (Thr-198) is a Phosphothreonine; by autocatalysis.

Belongs to the heat shock protein 70 family.

Its function is as follows. Acts as a chaperone. The sequence is that of Chaperone protein DnaK from Rhodopseudomonas palustris (strain HaA2).